A 535-amino-acid chain; its full sequence is Bifunctional purine biosynthesis protein PurH (535 aa).

One can recognise an MGS-like domain in the interval 6–151 (TRLPVRRALI…KNHKDVAIVV (146 aa)).

This sequence belongs to the PurH family.

It catalyses the reaction (6R)-10-formyltetrahydrofolate + 5-amino-1-(5-phospho-beta-D-ribosyl)imidazole-4-carboxamide = 5-formamido-1-(5-phospho-D-ribosyl)imidazole-4-carboxamide + (6S)-5,6,7,8-tetrahydrofolate. The enzyme catalyses IMP + H2O = 5-formamido-1-(5-phospho-D-ribosyl)imidazole-4-carboxamide. It participates in purine metabolism; IMP biosynthesis via de novo pathway; 5-formamido-1-(5-phospho-D-ribosyl)imidazole-4-carboxamide from 5-amino-1-(5-phospho-D-ribosyl)imidazole-4-carboxamide (10-formyl THF route): step 1/1. It functions in the pathway purine metabolism; IMP biosynthesis via de novo pathway; IMP from 5-formamido-1-(5-phospho-D-ribosyl)imidazole-4-carboxamide: step 1/1. This chain is Bifunctional purine biosynthesis protein PurH, found in Azotobacter vinelandii (strain DJ / ATCC BAA-1303).